Here is a 245-residue protein sequence, read N- to C-terminus: OVARIAN TUMOR DOMAIN-containing deubiquitinating enzyme 11 (245 aa).

Residues 1-37 are disordered; sequence MDENHRNPFANASTSARASGSTSASSNSSFSSSVADT. Positions 10–35 are enriched in low complexity; it reads ANASTSARASGSTSASSNSSFSSSVA. One can recognise an OTU domain in the interval 101–225; the sequence is LAELQMEGDG…EVHYNSLYAN (125 aa). Residue aspartate 109 is part of the active site. Cysteine 112 (nucleophile) is an active-site residue. Histidine 218 is an active-site residue.

The protein belongs to the peptidase C85 family.

It catalyses the reaction Thiol-dependent hydrolysis of ester, thioester, amide, peptide and isopeptide bonds formed by the C-terminal Gly of ubiquitin (a 76-residue protein attached to proteins as an intracellular targeting signal).. Its function is as follows. Hydrolase that can remove conjugated ubiquitin from proteins in vitro and may therefore play an important regulatory role at the level of protein turnover by preventing degradation. Inactive cysteine protease. This Arabidopsis thaliana (Mouse-ear cress) protein is OVARIAN TUMOR DOMAIN-containing deubiquitinating enzyme 11.